Consider the following 400-residue polypeptide: Formate-dependent phosphoribosylglycinamide formyltransferase (400 aa).

N(1)-(5-phospho-beta-D-ribosyl)glycinamide-binding positions include 22-23 and Glu82; that span reads EL. ATP is bound by residues Arg115, Lys156, 161–166, 196–199, and Glu204; these read SSGKGQ and EGFI. Positions 120–309 constitute an ATP-grasp domain; it reads RLAAETLCLP…EFALHARAIL (190 aa). The Mg(2+) site is built by Glu268 and Glu280. N(1)-(5-phospho-beta-D-ribosyl)glycinamide contacts are provided by residues Asp287, Lys361, and 368 to 369; that span reads RR.

The protein belongs to the PurK/PurT family. As to quaternary structure, homodimer.

The catalysed reaction is N(1)-(5-phospho-beta-D-ribosyl)glycinamide + formate + ATP = N(2)-formyl-N(1)-(5-phospho-beta-D-ribosyl)glycinamide + ADP + phosphate + H(+). The protein operates within purine metabolism; IMP biosynthesis via de novo pathway; N(2)-formyl-N(1)-(5-phospho-D-ribosyl)glycinamide from N(1)-(5-phospho-D-ribosyl)glycinamide (formate route): step 1/1. Functionally, involved in the de novo purine biosynthesis. Catalyzes the transfer of formate to 5-phospho-ribosyl-glycinamide (GAR), producing 5-phospho-ribosyl-N-formylglycinamide (FGAR). Formate is provided by PurU via hydrolysis of 10-formyl-tetrahydrofolate. This chain is Formate-dependent phosphoribosylglycinamide formyltransferase, found in Xanthomonas euvesicatoria pv. vesicatoria (strain 85-10) (Xanthomonas campestris pv. vesicatoria).